The primary structure comprises 689 residues: Methionine--tRNA ligase (689 aa).

Residues 15–25 (PYANGPIHLGH) carry the 'HIGH' region motif. Zn(2+) is bound by residues C146, C149, C159, and C162. The 'KMSKS' region signature appears at 332-336 (KMSKS). K335 contributes to the ATP binding site. In terms of domain architecture, tRNA-binding spans 588 to 689 (DFAKIDLRIA…EGAQPGMRVK (102 aa)).

The protein belongs to the class-I aminoacyl-tRNA synthetase family. MetG type 1 subfamily. As to quaternary structure, homodimer. Zn(2+) is required as a cofactor.

The protein localises to the cytoplasm. The catalysed reaction is tRNA(Met) + L-methionine + ATP = L-methionyl-tRNA(Met) + AMP + diphosphate. Is required not only for elongation of protein synthesis but also for the initiation of all mRNA translation through initiator tRNA(fMet) aminoacylation. This chain is Methionine--tRNA ligase, found in Shewanella baltica (strain OS155 / ATCC BAA-1091).